The following is a 288-amino-acid chain: Light-independent protochlorophyllide reductase iron-sulfur ATP-binding protein (288 aa).

Residues 10–15 (GIGKST) and K39 each bind ATP. S14 is a Mg(2+) binding site. [4Fe-4S] cluster is bound by residues C95 and C129. Position 180-181 (180-181 (NR)) interacts with ATP.

This sequence belongs to the NifH/BchL/ChlL family. In terms of assembly, homodimer. Protochlorophyllide reductase is composed of three subunits; ChlL, ChlN and ChlB. [4Fe-4S] cluster is required as a cofactor.

The catalysed reaction is chlorophyllide a + oxidized 2[4Fe-4S]-[ferredoxin] + 2 ADP + 2 phosphate = protochlorophyllide a + reduced 2[4Fe-4S]-[ferredoxin] + 2 ATP + 2 H2O. The protein operates within porphyrin-containing compound metabolism; chlorophyll biosynthesis (light-independent). Functionally, component of the dark-operative protochlorophyllide reductase (DPOR) that uses Mg-ATP and reduced ferredoxin to reduce ring D of protochlorophyllide (Pchlide) to form chlorophyllide a (Chlide). This reaction is light-independent. The L component serves as a unique electron donor to the NB-component of the complex, and binds Mg-ATP. This Nostoc punctiforme (strain ATCC 29133 / PCC 73102) protein is Light-independent protochlorophyllide reductase iron-sulfur ATP-binding protein.